The following is a 78-amino-acid chain: Rubredoxin (78 aa).

One can recognise a Rubredoxin-like domain in the interval 23–74 (DARLECKICWWEYDPEVGDPVWQIAPGTSFSALPAHWRCPNCDGEAEQFMVL). Positions 28, 31, 61, and 64 each coordinate Fe cation.

It belongs to the rubredoxin family. Requires Fe(3+) as cofactor.

Rubredoxin is a small nonheme, iron protein lacking acid-labile sulfide. Its single Fe, chelated to 4 Cys, functions as an electron acceptor and may also stabilize the conformation of the molecule. Could be involved in hydrogenase-linked redox processes. This is Rubredoxin (hoxR) from Cupriavidus necator (strain ATCC 17699 / DSM 428 / KCTC 22496 / NCIMB 10442 / H16 / Stanier 337) (Ralstonia eutropha).